Reading from the N-terminus, the 220-residue chain is Fructose-6-phosphate aldolase 1 (220 aa).

Catalysis depends on Lys-85, which acts as the Schiff-base intermediate with substrate.

This sequence belongs to the transaldolase family. Type 3A subfamily. Homodecamer.

Its subcellular location is the cytoplasm. The catalysed reaction is beta-D-fructose 6-phosphate = dihydroxyacetone + D-glyceraldehyde 3-phosphate. Its function is as follows. Catalyzes the reversible formation of fructose 6-phosphate from dihydroxyacetone and D-glyceraldehyde 3-phosphate via an aldolization reaction. The protein is Fructose-6-phosphate aldolase 1 (fsaA) of Escherichia coli O157:H7.